The chain runs to 168 residues: MIFIDNRQNKFDVTEELTKKLEEVISFVLKEEKVKEDCEVSLVFVDNEEIRGINNETRGIDKTTDVLSFPMIDYPEDKVYKDVYLEHEFDKCYFDGDELILGDIVLSLERTKEQSIEFNHSFEREACYLVTHSVLHLLGYDHMEEEEKARMRGREEELLGKLNITRES.

Histidine 132, histidine 136, and histidine 142 together coordinate Zn(2+).

This sequence belongs to the endoribonuclease YbeY family. It depends on Zn(2+) as a cofactor.

It localises to the cytoplasm. In terms of biological role, single strand-specific metallo-endoribonuclease involved in late-stage 70S ribosome quality control and in maturation of the 3' terminus of the 16S rRNA. The chain is Endoribonuclease YbeY from Clostridium perfringens (strain SM101 / Type A).